We begin with the raw amino-acid sequence, 81 residues long: ATP synthase subunit c (81 aa).

Transmembrane regions (helical) follow at residues 4-24 (MIAQGALIGGGLIMAGGAIGA) and 57-77 (VGLVEAAYFINLAFMALFVFA).

The protein belongs to the ATPase C chain family. In terms of assembly, F-type ATPases have 2 components, F(1) - the catalytic core - and F(0) - the membrane proton channel. F(1) has five subunits: alpha(3), beta(3), gamma(1), delta(1), epsilon(1). F(0) has three main subunits: a(1), b(2) and c(10-14). The alpha and beta chains form an alternating ring which encloses part of the gamma chain. F(1) is attached to F(0) by a central stalk formed by the gamma and epsilon chains, while a peripheral stalk is formed by the delta and b chains.

It localises to the cell membrane. F(1)F(0) ATP synthase produces ATP from ADP in the presence of a proton or sodium gradient. F-type ATPases consist of two structural domains, F(1) containing the extramembraneous catalytic core and F(0) containing the membrane proton channel, linked together by a central stalk and a peripheral stalk. During catalysis, ATP synthesis in the catalytic domain of F(1) is coupled via a rotary mechanism of the central stalk subunits to proton translocation. In terms of biological role, key component of the F(0) channel; it plays a direct role in translocation across the membrane. A homomeric c-ring of between 10-14 subunits forms the central stalk rotor element with the F(1) delta and epsilon subunits. The protein is ATP synthase subunit c of Mycobacterium leprae (strain TN).